We begin with the raw amino-acid sequence, 442 residues long: Proline--tRNA ligase (442 aa).

Belongs to the class-II aminoacyl-tRNA synthetase family. ProS type 2 subfamily. In terms of assembly, homodimer.

It localises to the cytoplasm. It carries out the reaction tRNA(Pro) + L-proline + ATP = L-prolyl-tRNA(Pro) + AMP + diphosphate. Its function is as follows. Catalyzes the attachment of proline to tRNA(Pro) in a two-step reaction: proline is first activated by ATP to form Pro-AMP and then transferred to the acceptor end of tRNA(Pro). This Brucella suis (strain ATCC 23445 / NCTC 10510) protein is Proline--tRNA ligase.